The chain runs to 482 residues: Butyrophilin-like protein 2 (482 aa).

Topologically, residues 1-6 (MVDFPG) are cytoplasmic. The helical; Signal-anchor for type II membrane protein transmembrane segment at 7 to 23 (YNLSGAVASFLFILLTM) threads the bilayer. Residues 24 to 482 (KQSEDFRVIG…VAVGLPRKRS (459 aa)) are Extracellular-facing. Ig-like V-type domains lie at 29–140 (FRVI…LLLK), 142–234 (AGLG…SVIS), and 236–355 (PEKL…ASLD). Disulfide bonds link cysteine 50-cysteine 124, cysteine 164-cysteine 218, and cysteine 267-cysteine 341. The N-linked (GlcNAc...) asparagine glycan is linked to asparagine 210. Asparagine 427 carries an N-linked (GlcNAc...) asparagine glycan.

It belongs to the immunoglobulin superfamily. BTN/MOG family. Expressed in brain, heart, kidney, liver, pancreas, ovary, leukocyte, small intestine, testis and thymus.

It is found in the membrane. In terms of biological role, negative regulator of T-cell proliferation. The sequence is that of Butyrophilin-like protein 2 from Homo sapiens (Human).